The chain runs to 248 residues: UDP-N-acetyl-D-mannosaminuronic acid transferase (248 aa).

The protein belongs to the glycosyltransferase 26 family.

It catalyses the reaction UDP-N-acetyl-alpha-D-mannosaminouronate + N-acetyl-alpha-D-glucosaminyl-di-trans,octa-cis-undecaprenyl diphosphate = beta-D-ManNAcA-(1-&gt;4)-alpha-D-GlcNAc-di-trans,octa-cis-undecaprenyl diphosphate + UDP + H(+). It participates in bacterial outer membrane biogenesis; enterobacterial common antigen biosynthesis. Its function is as follows. Catalyzes the synthesis of Und-PP-GlcNAc-ManNAcA (Lipid II), the second lipid-linked intermediate involved in enterobacterial common antigen (ECA) synthesis. This chain is UDP-N-acetyl-D-mannosaminuronic acid transferase, found in Klebsiella pneumoniae subsp. pneumoniae (strain ATCC 700721 / MGH 78578).